The sequence spans 117 residues: Protein GL2-INTERACTING REPRESSOR 2 (117 aa).

The interval 1–56 (MSRRNKNGPKLELRLNLSPPPSQASQMSLVRSPNRSNTTSPSSCVSSETNQEENET) is disordered. Residues 10–15 (KLELRL) carry the EAR motif. Positions 31–49 (RSPNRSNTTSPSSCVSSET) are enriched in low complexity.

In terms of assembly, interacts with GL2. Interacts with TPL.

The protein localises to the nucleus. Its function is as follows. Acts as a negative regulator of root hair development redundantly with GIR1. GIR1 and GIR2 may function as adapter proteins that associate with GL2 and participate in the control of root hair formation. GIR1 and GIR2 may function as adapter proteins that associate with TPL and participate in the repression of root gene expression. In Arabidopsis thaliana (Mouse-ear cress), this protein is Protein GL2-INTERACTING REPRESSOR 2.